A 172-amino-acid polypeptide reads, in one-letter code: Peptidyl-prolyl cis-trans isomerase (172 aa).

The 164-residue stretch at 7–170 folds into the PPIase cyclophilin-type domain; sequence FFDMAIAGNP…RPVTIADCGQ (164 aa).

This sequence belongs to the cyclophilin-type PPIase family. In terms of tissue distribution, expressed in meristematic tissues, with higher levels in nodules.

The protein resides in the cytoplasm. The catalysed reaction is [protein]-peptidylproline (omega=180) = [protein]-peptidylproline (omega=0). Binds cyclosporin A (CsA). CsA mediates some of its effects via an inhibitory action on PPIase. Functionally, PPIases accelerate the folding of proteins. It catalyzes the cis-trans isomerization of proline imidic peptide bonds in oligopeptides. This chain is Peptidyl-prolyl cis-trans isomerase, found in Lupinus luteus (European yellow lupine).